The primary structure comprises 629 residues: Methyl-accepting chemotaxis protein PscA (629 aa).

Residues 1–9 (MKNLGFSKK) lie on the Cytoplasmic side of the membrane. A helical membrane pass occupies residues 10 to 30 (ILLAAALIVVVAFSVFIVIND). Over 31–276 (YRQRQSLKSS…AYAMLTEFRT (246 aa)) the chain is Periplasmic. In terms of domain architecture, Cache spans 36-258 (SLKSSVKSEL…QGVATANWYV (223 aa)). Residues 277–297 (SAITAMVVVVMVIILLLGPLI) form a helical membrane-spanning segment. Residues 298–352 (RVLMQPLHQMGRAMRDIADGEGDLTKRLAITSHDEFGALAESFNHFVERIHTSIR) form the HAMP domain. Residues 298–629 (RVLMQPLHQM…LQQLVGSFRI (332 aa)) are Cytoplasmic-facing. Residues 357–593 (TAAQLGEVAT…SINVDITHIN (237 aa)) enclose the Methyl-accepting transducer domain.

Belongs to the methyl-accepting chemotaxis (MCP) protein family.

The protein resides in the cell inner membrane. Its function is as follows. Chemotactic-signal transducers respond to changes in the concentration of attractants and repellents in the environment, transduce a signal from the outside to the inside of the cell, and facilitate sensory adaptation through the variation of the level of methylation. PscA recognizes specifically and with high affinity L-Asp, D-Asp and L-Glu. It exerts a double function, in mediating chemotaxis to these amino acids and in modulating cyclic di-GMP (c-di-GMP) levels, causing alterations in biofilm development. Plays a key role in the infection process. It may facilitate bacterial entry into the plant. In Pseudomonas syringae pv. tomato (strain ATCC BAA-871 / DC3000), this protein is Methyl-accepting chemotaxis protein PscA.